The following is a 387-amino-acid chain: Succinate--CoA ligase [ADP-forming] subunit beta (387 aa).

The region spanning 9–236 is the ATP-grasp domain; the sequence is KELFAKHNVP…RAATDPLELK (228 aa). Residues Lys45, 52–54, Ser94, and Glu99 contribute to the ATP site; that span reads GRG. Mg(2+) contacts are provided by Asn191 and Asp205. Residues Asn256 and 318–320 each bind substrate; that span reads GIT.

It belongs to the succinate/malate CoA ligase beta subunit family. As to quaternary structure, heterotetramer of two alpha and two beta subunits. Requires Mg(2+) as cofactor.

The catalysed reaction is succinate + ATP + CoA = succinyl-CoA + ADP + phosphate. It carries out the reaction GTP + succinate + CoA = succinyl-CoA + GDP + phosphate. It participates in carbohydrate metabolism; tricarboxylic acid cycle; succinate from succinyl-CoA (ligase route): step 1/1. In terms of biological role, succinyl-CoA synthetase functions in the citric acid cycle (TCA), coupling the hydrolysis of succinyl-CoA to the synthesis of either ATP or GTP and thus represents the only step of substrate-level phosphorylation in the TCA. The beta subunit provides nucleotide specificity of the enzyme and binds the substrate succinate, while the binding sites for coenzyme A and phosphate are found in the alpha subunit. This is Succinate--CoA ligase [ADP-forming] subunit beta from Mycobacterium tuberculosis (strain CDC 1551 / Oshkosh).